The chain runs to 275 residues: Energy-coupling factor transporter ATP-binding protein EcfA1 (275 aa).

In terms of domain architecture, ABC transporter spans 5–240; that stretch reads IDVKNLSFRY…NDLDQIGLDD (236 aa). 40-47 is a binding site for ATP; it reads GHNGSGKS.

This sequence belongs to the ABC transporter superfamily. Energy-coupling factor EcfA family. As to quaternary structure, forms a stable energy-coupling factor (ECF) transporter complex composed of 2 membrane-embedded substrate-binding proteins (S component), 2 ATP-binding proteins (A component) and 2 transmembrane proteins (T component).

It is found in the cell membrane. ATP-binding (A) component of a common energy-coupling factor (ECF) ABC-transporter complex. Unlike classic ABC transporters this ECF transporter provides the energy necessary to transport a number of different substrates. The sequence is that of Energy-coupling factor transporter ATP-binding protein EcfA1 from Streptococcus pneumoniae serotype 4 (strain ATCC BAA-334 / TIGR4).